An 892-amino-acid chain; its full sequence is Formin-like protein 8 (892 aa).

The signal sequence occupies residues 1–23 (MPPAIARFVAIAAVLLCGHVAVA). Residues 43 to 119 (FPIEWTPPPS…SGSGSGHHGG (77 aa)) are disordered. A compositionally biased stretch (pro residues) spans 47-59 (WTPPPSPPPPPAP). The span at 87-111 (TTPTSPGTTPSPTTVAADVSKTPSG) shows a compositional bias: low complexity. The chain crosses the membrane as a helical span at residues 126-146 (IVAAGAGAAAAVALLGFACAF). Positions 188-457 (PTTPARHHGP…GSGEPRPKLK (270 aa)) are disordered. The segment covering 210–230 (LRSERARRGVSRDEDADHPSP) has biased composition (basic and acidic residues). Composition is skewed to low complexity over residues 268–286 (AEAW…TTAS), 297–306 (FFPPVAAIAA), and 321–330 (RTRFSTGSTP). A compositionally biased stretch (pro residues) spans 339–383 (SPRPVQPSNAPPPPPPPPPPPPPPPPPKLNTAPKPPPPPPPPPSV). Residues 424–436 (AATTVDNNGSTSM) show a composition bias toward polar residues. In terms of domain architecture, FH2 spans 446 to 867 (DGGSGEPRPK…GSARSFRISA (422 aa)).

It belongs to the formin-like family. Class-I subfamily.

It is found in the membrane. The sequence is that of Formin-like protein 8 (FH8) from Oryza sativa subsp. japonica (Rice).